Here is a 328-residue protein sequence, read N- to C-terminus: Gonadotropin-releasing hormone receptor (328 aa).

Topologically, residues 1-38 (MANSDSPEQNENHCSAINSSIPLTPGSLPTLTLSGKIR) are extracellular. An N-linked (GlcNAc...) asparagine glycan is attached at N18. The chain crosses the membrane as a helical span at residues 39–58 (VTVTFFLFLLSTIFNTSFLL). Residues 59–77 (KLQNWTQRKEKRKKLSRMK) are Cytoplasmic-facing. Residues 78-97 (LLLKHLTLANLLETLIVMPL) traverse the membrane as a helical segment. Topologically, residues 98 to 115 (DGMWNITVQWYAGELLCK) are extracellular. A glycan (N-linked (GlcNAc...) asparagine) is linked at N102. A disulfide bridge links C114 with C196. Residues 116 to 137 (VLSYLKLFSMYAPAFMMVVISL) form a helical membrane-spanning segment. The Cytoplasmic segment spans residues 138 to 164 (DRSLAITKPLAVKSNSKLGQFMIGLAW). A helical transmembrane segment spans residues 165-184 (LLSSIFAGPQLYIFGMIHLA). Residues 185-212 (DDSGQTEGFSQCVTHCSFPQWWHQAFYN) are Extracellular-facing. The helical transmembrane segment at 213-232 (FFTFSCLFIIPLLIMVICNA) threads the bilayer. The Cytoplasmic segment spans residues 233–281 (KIIFTLTRVLHQDPHKLQLNQSKNNIPRARLRTLKMTVAFATSFTVCWT). The chain crosses the membrane as a helical span at residues 282-300 (PYYVLGIWYWFDPDMVNRV). Residues 301–306 (SDPVNH) lie on the Extracellular side of the membrane. The helical transmembrane segment at 307 to 326 (FFFLFAFLNPCFDPLIYGYF) threads the bilayer. Residues 327-328 (SL) lie on the Cytoplasmic side of the membrane.

It belongs to the G-protein coupled receptor 1 family.

It is found in the cell membrane. Its function is as follows. Receptor for gonadotropin releasing hormone (GnRH) that mediates the action of GnRH to stimulate the secretion of the gonadotropic hormones luteinizing hormone (LH) and follicle-stimulating hormone (FSH). This receptor mediates its action by association with G-proteins that activate a phosphatidylinositol-calcium second messenger system. In Bos taurus (Bovine), this protein is Gonadotropin-releasing hormone receptor (GNRHR).